A 588-amino-acid chain; its full sequence is MNNSINHKFHHISRAEYQELLAVSRGDAVADYIIDNVSILDLINGGEISGPIVIKGRYIAGVGAEYADAPALQRIDARGATAVPGFIDAHLHIESSMMTPVTFETATLPRGLTTVICDPHEIVNVMGEAGFAWFARCAEQARQNQYLQVSSCVPALEGCDVNGASFTLEQMLAWRDHPQVTGLAEMMDYPGIISGQNALLDKLDAFRHLTLDGHCPGLGGKELNAYIAAGIENCHESYQLEEGRRKLQLGMSLMIREGSAARNLNALAPLINEFNSPQCMLCTDDRNPWEIAHEGHIDALIRRLIEQHNVPLHVAYRVASWSTARHFGLNHLGLLAPGKQADIVLLSDARKVTVQQVLVKGEPIDAQTLQAEESARLAQSAPPYGNTIDRQPVSASDFALQFTPGKRYRVIEVIHNELITHSRSSVYSENGFDRDDVCFIAVLERYGQRLAPACGLLGGFGLNEGALAATVSHDSHNIVVIGRSAEEMALAVNQVIQDGGGLCVVRNGQVQSHLPLPIAGLMSTDTAQSLAEQIDALKAAARECGPLPDEPFIQMAFLSLPVIPALKLTSQGLFDGEKFAFTTLEVTE.

This sequence belongs to the metallo-dependent hydrolases superfamily. Adenine deaminase family. In terms of assembly, homodimer. Mn(2+) serves as cofactor.

It carries out the reaction adenine + H2O + H(+) = hypoxanthine + NH4(+). In Escherichia coli O6:H1 (strain CFT073 / ATCC 700928 / UPEC), this protein is Adenine deaminase.